The sequence spans 39 residues: Photosystem II reaction center protein L (39 aa).

A helical transmembrane segment spans residues 18–38 (ILYWGLLLIFVLAVLFSNYFF).

This sequence belongs to the PsbL family. As to quaternary structure, PSII is composed of 1 copy each of membrane proteins PsbA, PsbB, PsbC, PsbD, PsbE, PsbF, PsbH, PsbI, PsbJ, PsbK, PsbL, PsbM, PsbT, PsbX, PsbY, PsbZ, Psb30/Ycf12, at least 3 peripheral proteins of the oxygen-evolving complex and a large number of cofactors. It forms dimeric complexes.

It localises to the plastid membrane. Functionally, one of the components of the core complex of photosystem II (PSII). PSII is a light-driven water:plastoquinone oxidoreductase that uses light energy to abstract electrons from H(2)O, generating O(2) and a proton gradient subsequently used for ATP formation. It consists of a core antenna complex that captures photons, and an electron transfer chain that converts photonic excitation into a charge separation. This subunit is found at the monomer-monomer interface and is required for correct PSII assembly and/or dimerization. This is Photosystem II reaction center protein L from Cuscuta pentagona (Five-angled dodder).